Reading from the N-terminus, the 156-residue chain is 6,7-dimethyl-8-ribityllumazine synthase (156 aa).

5-amino-6-(D-ribitylamino)uracil is bound by residues F23, 57-59 (AFE), and 81-83 (AVI). 86-87 (AT) contacts (2S)-2-hydroxy-3-oxobutyl phosphate. H89 acts as the Proton donor in catalysis. F114 is a binding site for 5-amino-6-(D-ribitylamino)uracil. Position 128 (R128) interacts with (2S)-2-hydroxy-3-oxobutyl phosphate.

Belongs to the DMRL synthase family.

It carries out the reaction (2S)-2-hydroxy-3-oxobutyl phosphate + 5-amino-6-(D-ribitylamino)uracil = 6,7-dimethyl-8-(1-D-ribityl)lumazine + phosphate + 2 H2O + H(+). Its pathway is cofactor biosynthesis; riboflavin biosynthesis; riboflavin from 2-hydroxy-3-oxobutyl phosphate and 5-amino-6-(D-ribitylamino)uracil: step 1/2. Functionally, catalyzes the formation of 6,7-dimethyl-8-ribityllumazine by condensation of 5-amino-6-(D-ribitylamino)uracil with 3,4-dihydroxy-2-butanone 4-phosphate. This is the penultimate step in the biosynthesis of riboflavin. The chain is 6,7-dimethyl-8-ribityllumazine synthase from Sulfurovum sp. (strain NBC37-1).